We begin with the raw amino-acid sequence, 1417 residues long: Non-structural polyprotein 1AB (1417 aa).

Residues 105–143 are a coiled coil; sequence KLIHKANALQERLRLSQEEKATLALDVQFLQHENVRLKE. 5 helical membrane-spanning segments follow: residues 155–175, 240–260, 287–307, 314–334, and 345–365; these read MKWIIVGAVLTFLSLIPGGYA, VFYYIHYYEMWNIFMFVLAIG, VLPTIPFHTTMTLWVMNTLMV, LLAITMAILAPILGIIFLCFM, and GLIATAVLIAGGHACLTLTGT. Catalysis depends on charge relay system; for serine protease activity residues H462, D490, and S552. A coiled-coil region spans residues 588 to 615; that stretch reads VKAPSQVELLKEEIERLKAQLNSAAENP. Position 694 is an O-(5'-phospho-RNA)-tyrosine (Y694). Residues 753 to 813 are disordered; sequence NFDQAKPTPA…QKIEPQPYSQ (61 aa). Residues 784–796 show a composition bias toward basic and acidic residues; sequence SQKKEKQPEHEQQ. The RdRp catalytic domain maps to 1162-1288; the sequence is KHFIEFDWTR…TTPSVPDNYE (127 aa).

This sequence belongs to the astroviridae polyprotein 1AB family. Monomer. In terms of processing, cleaved by the viral and host proteases. The protease is probably autocatalytically cleaved.

It is found in the host membrane. It carries out the reaction RNA(n) + a ribonucleoside 5'-triphosphate = RNA(n+1) + diphosphate. Functionally, responsible for the cleavage of the polyprotein into functional products. In terms of biological role, protein covalently attached to the 5' extremity of the genomic and subgenomic RNAs. It may serve as a primer for the replicase. This is Non-structural polyprotein 1AB (ORF1) from Human astrovirus-8 (HAstV-8).